A 162-amino-acid chain; its full sequence is Ribosome-binding factor A (162 aa).

Residues 124–162 (ARVRSGAKPAGEADPYRESGSGVEPGRDGSIGDDDQPEY) form a disordered region.

Belongs to the RbfA family. As to quaternary structure, monomer. Binds 30S ribosomal subunits, but not 50S ribosomal subunits or 70S ribosomes.

It localises to the cytoplasm. One of several proteins that assist in the late maturation steps of the functional core of the 30S ribosomal subunit. Associates with free 30S ribosomal subunits (but not with 30S subunits that are part of 70S ribosomes or polysomes). Required for efficient processing of 16S rRNA. May interact with the 5'-terminal helix region of 16S rRNA. This Mycolicibacterium paratuberculosis (strain ATCC BAA-968 / K-10) (Mycobacterium paratuberculosis) protein is Ribosome-binding factor A.